We begin with the raw amino-acid sequence, 223 residues long: MSEDRELQALLRLTAWLSPAFPIGSFAYSGGLERAVADGLVTDAASLANWIGTLIGHGSVWNDAVLLTESHRRQAEAPGLAEIAALAEALAGSRERHQETMLLGEAFLLAARAWPDEVFERLPGKTAYPIAVGAVAGAHGIGPEKVLAVFLHAYASQAVSSGIRLGVAGQKDGVAVLAGLEEQIAGTARRAAASTLDDLGSATVQADIASLRHETQTTRLFRS.

The protein belongs to the UreF family. In terms of assembly, ureD, UreF and UreG form a complex that acts as a GTP-hydrolysis-dependent molecular chaperone, activating the urease apoprotein by helping to assemble the nickel containing metallocenter of UreC. The UreE protein probably delivers the nickel.

It is found in the cytoplasm. Its function is as follows. Required for maturation of urease via the functional incorporation of the urease nickel metallocenter. The chain is Urease accessory protein UreF from Rhizobium etli (strain ATCC 51251 / DSM 11541 / JCM 21823 / NBRC 15573 / CFN 42).